A 436-amino-acid chain; its full sequence is DNA primase DnaG (436 aa).

The Toprim domain occupies 169 to 243 (DSIIVVEGRA…DIDYVARAPY (75 aa)). The Mg(2+) site is built by Glu-175, Asp-217, and Asp-219.

This sequence belongs to the archaeal DnaG primase family. In terms of assembly, forms a ternary complex with MCM helicase and DNA. It depends on Mg(2+) as a cofactor.

The catalysed reaction is ssDNA + n NTP = ssDNA/pppN(pN)n-1 hybrid + (n-1) diphosphate.. Its function is as follows. RNA polymerase that catalyzes the synthesis of short RNA molecules used as primers for DNA polymerase during DNA replication. This is DNA primase DnaG from Methanococcus maripaludis (strain DSM 14266 / JCM 13030 / NBRC 101832 / S2 / LL).